A 487-amino-acid chain; its full sequence is Probable UDP-N-acetylglucosamine pyrophosphorylase (487 aa).

Positions 105 to 108 (LAGG) match the Substrate binding motif. UTP contacts are provided by residues 105–108 (LAGG), Lys-119, Gln-198, and Gly-225. A substrate-binding site is contributed by Asn-226. UTP is bound at residue Asp-256. A Substrate binding motif is present at residues 307–308 (EY). UTP is bound at residue Lys-382. Lys-412 lines the substrate pocket.

This sequence belongs to the UDPGP type 1 family.

It is found in the cytoplasm. It carries out the reaction N-acetyl-alpha-D-glucosamine 1-phosphate + UTP + H(+) = UDP-N-acetyl-alpha-D-glucosamine + diphosphate. Its pathway is nucleotide-sugar biosynthesis; UDP-N-acetyl-alpha-D-glucosamine biosynthesis; UDP-N-acetyl-alpha-D-glucosamine from N-acetyl-alpha-D-glucosamine 1-phosphate: step 1/1. This Dictyostelium discoideum (Social amoeba) protein is Probable UDP-N-acetylglucosamine pyrophosphorylase (uap1).